The primary structure comprises 440 residues: Chromosome partition protein MukF (440 aa).

A leucine-zipper region spans residues 208 to 236 (LSETSGTLRELQDTLEAAGDKLQANLLRI).

The protein belongs to the MukF family. Interacts, and probably forms a ternary complex, with MukE and MukB via its C-terminal region. The complex formation is stimulated by calcium or magnesium. It is required for an interaction between MukE and MukB.

It localises to the cytoplasm. The protein resides in the nucleoid. Involved in chromosome condensation, segregation and cell cycle progression. May participate in facilitating chromosome segregation by condensation DNA from both sides of a centrally located replisome during cell division. Not required for mini-F plasmid partitioning. Probably acts via its interaction with MukB and MukE. Overexpression results in anucleate cells. It has a calcium binding activity. In Escherichia fergusonii (strain ATCC 35469 / DSM 13698 / CCUG 18766 / IAM 14443 / JCM 21226 / LMG 7866 / NBRC 102419 / NCTC 12128 / CDC 0568-73), this protein is Chromosome partition protein MukF.